The following is a 341-amino-acid chain: Glycerol-3-phosphate dehydrogenase [NAD(P)+] 1 (341 aa).

Positions 17, 18, 37, and 112 each coordinate NADPH. Residues Lys112 and Gly140 each coordinate sn-glycerol 3-phosphate. An NADPH-binding site is contributed by Ala144. Residues Lys195, Asp248, Ser258, Arg259, and Asn260 each contribute to the sn-glycerol 3-phosphate site. The active-site Proton acceptor is Lys195. NADPH is bound at residue Arg259. Positions 283 and 285 each coordinate NADPH.

It belongs to the NAD-dependent glycerol-3-phosphate dehydrogenase family.

The protein resides in the cytoplasm. It catalyses the reaction sn-glycerol 3-phosphate + NAD(+) = dihydroxyacetone phosphate + NADH + H(+). The catalysed reaction is sn-glycerol 3-phosphate + NADP(+) = dihydroxyacetone phosphate + NADPH + H(+). The protein operates within membrane lipid metabolism; glycerophospholipid metabolism. Its function is as follows. Catalyzes the reduction of the glycolytic intermediate dihydroxyacetone phosphate (DHAP) to sn-glycerol 3-phosphate (G3P), the key precursor for phospholipid synthesis. This Mycobacterium bovis (strain ATCC BAA-935 / AF2122/97) protein is Glycerol-3-phosphate dehydrogenase [NAD(P)+] 1.